The following is a 203-amino-acid chain: Endo-type membrane-bound lytic murein transglycosylase A (203 aa).

The signal sequence occupies residues 1 to 15; the sequence is MKLRWFAFLIVLLAG. Cys-16 carries N-palmitoyl cysteine lipidation. Cys-16 is lipidated: S-diacylglycerol cysteine.

It belongs to the transglycosylase Slt family.

It is found in the cell outer membrane. It catalyses the reaction Endolytic cleavage of the (1-&gt;4)-beta-glycosidic linkage between N-acetylmuramic acid (MurNAc) and N-acetylglucosamine (GlcNAc) residues in peptidoglycan with concomitant formation of a 1,6-anhydrobond in the MurNAc residue.. In terms of biological role, murein-degrading enzyme. May play a role in recycling of muropeptides during cell elongation and/or cell division. Preferentially cleaves at a distance of more than two disaccharide units from the ends of the glycan chain. The polypeptide is Endo-type membrane-bound lytic murein transglycosylase A (Escherichia coli O127:H6 (strain E2348/69 / EPEC)).